Reading from the N-terminus, the 154-residue chain is Actin-related protein 2/3 complex subunit 5 (154 aa).

Thr-142 is subject to Phosphothreonine.

This sequence belongs to the ARPC5 family. In terms of assembly, component of the Arp2/3 complex composed of ARP2, ARP3, ARC40/p41-ARC, ARC35/p34-ARC, ARC18/p21-ARC, ARC19/p20-ARC and ARC16/p16-ARC.

It is found in the cytoplasm. It localises to the cytoskeleton. The protein localises to the actin patch. Its function is as follows. Functions as a component of the Arp2/3 complex which is involved in regulation of actin polymerization and together with an activating nucleation-promoting factor (NPF) mediates the formation of branched actin networks. The chain is Actin-related protein 2/3 complex subunit 5 (ARC15) from Saccharomyces cerevisiae (strain ATCC 204508 / S288c) (Baker's yeast).